We begin with the raw amino-acid sequence, 342 residues long: Phenylalanine--tRNA ligase alpha subunit (342 aa).

Glu257 is a binding site for Mg(2+).

Belongs to the class-II aminoacyl-tRNA synthetase family. Phe-tRNA synthetase alpha subunit type 1 subfamily. In terms of assembly, tetramer of two alpha and two beta subunits. Mg(2+) serves as cofactor.

It localises to the cytoplasm. The catalysed reaction is tRNA(Phe) + L-phenylalanine + ATP = L-phenylalanyl-tRNA(Phe) + AMP + diphosphate + H(+). This chain is Phenylalanine--tRNA ligase alpha subunit, found in Legionella pneumophila subsp. pneumophila (strain Philadelphia 1 / ATCC 33152 / DSM 7513).